The following is a 236-amino-acid chain: uncharacterized protein (236 aa).

A disordered region spans residues 1–73 (MEPGGSENAA…GGGWGWGNTQ (73 aa)).

This is an uncharacterized protein from Homo sapiens (Human).